We begin with the raw amino-acid sequence, 35 residues long: Beta-theraphotoxin-Hlv1a (35 aa).

3 disulfide bridges follow: cysteine 2–cysteine 17, cysteine 9–cysteine 24, and cysteine 16–cysteine 31.

This sequence belongs to the neurotoxin 10 (Hwtx-1) family. 10 (haplotoxin-1) subfamily. In terms of tissue distribution, expressed by the venom gland.

It is found in the secreted. Its function is as follows. Spider venom neurotoxin that blocks voltage-gated sodium channel Nav1.3/SCN3A in human (IC(50)=1 uM) and rat (IC(50)=1 uM). This is Beta-theraphotoxin-Hlv1a from Cyriopagopus lividus (Cobalt blue tarantula).